Here is a 318-residue protein sequence, read N- to C-terminus: Protein-methionine-sulfoxide reductase catalytic subunit MsrP (318 aa).

Residues 1 to 40 (MNRFTRYDVTPEVIFNQRRQIIKAMGLGAAALSLPNIGFA) constitute a signal peptide (tat-type signal). Residues N72, 75–76 (YE), C130, T165, N217, R222, and 233–235 (SIK) contribute to the Mo-molybdopterin site.

It belongs to the MsrP family. Heterodimer of a catalytic subunit (MsrP) and a heme-binding subunit (MsrQ). Mo-molybdopterin serves as cofactor. Post-translationally, predicted to be exported by the Tat system. The position of the signal peptide cleavage has not been experimentally proven.

It is found in the periplasm. It carries out the reaction L-methionyl-[protein] + a quinone + H2O = L-methionyl-(S)-S-oxide-[protein] + a quinol. The catalysed reaction is L-methionyl-[protein] + a quinone + H2O = L-methionyl-(R)-S-oxide-[protein] + a quinol. Functionally, part of the MsrPQ system that repairs oxidized periplasmic proteins containing methionine sulfoxide residues (Met-O), using respiratory chain electrons. Thus protects these proteins from oxidative-stress damage caused by reactive species of oxygen and chlorine generated by the host defense mechanisms. MsrPQ is essential for the maintenance of envelope integrity under bleach stress, rescuing a wide series of structurally unrelated periplasmic proteins from methionine oxidation. The catalytic subunit MsrP is non-stereospecific, being able to reduce both (R-) and (S-) diastereoisomers of methionine sulfoxide. This chain is Protein-methionine-sulfoxide reductase catalytic subunit MsrP, found in Actinobacillus pleuropneumoniae serotype 3 (strain JL03).